A 202-amino-acid polypeptide reads, in one-letter code: MDYFSMMVSLLLVAFHGAPETAASGTELSTGAENPGEKPPASAPWRPRRSKRCSCSSLMDKECVYFCHLDIIWVNTPGHIVPYGLGSPSRSKRSLKDLFPTRAAYHKNRCQCTSPHDKKCWNFCQAGTELRAQETMEKGRNNLKKGKDCSKLGKKCILQKLMQGRKIRRLEAISNSIKTSFHAAQLRAQLHREQKVTHNRTH.

Positions 1–23 (MDYFSMMVSLLLVAFHGAPETAA) are cleaved as a signal peptide. A disordered region spans residues 24–49 (SGTELSTGAENPGEKPPASAPWRPRR). The propeptide occupies 24 to 50 (SGTELSTGAENPGEKPPASAPWRPRRS). 2 disulfides stabilise this stretch: C53–C67 and C55–C63. Residues 74 to 202 (VNTPGHIVPY…EQKVTHNRTH (129 aa)) constitute a propeptide that is removed on maturation. Residues 110-124 (CQCTSPHDKKCWNFC) form an endothelin-like region.

The protein belongs to the endothelin/sarafotoxin family.

It localises to the secreted. In terms of biological role, endothelins are endothelium-derived vasoconstrictor peptides. Probable ligand for G-protein coupled receptors EDNRA and EDNRB which activates PTK2B, BCAR1, BCAR3 and, GTPases RAP1 and RHOA cascade in glomerular mesangial cells. Also binds the DEAR/FBXW7-AS1 receptor. Promotes mesenteric arterial wall remodeling via activation of ROCK signaling and subsequent colocalization of NFATC3 with F-actin filaments. NFATC3 then translocates to the nucleus where it subsequently promotes the transcription of the smooth muscle hypertrophy and differentiation marker ACTA2. The polypeptide is Endothelin-1 (EDN1) (Oryctolagus cuniculus (Rabbit)).